Here is a 357-residue protein sequence, read N- to C-terminus: Holliday junction branch migration complex subunit RuvB (357 aa).

A large ATPase domain (RuvB-L) region spans residues 4–195 (TDKLAAKAVS…FGIVARLEFY (192 aa)). ATP contacts are provided by residues L34, R35, G76, K79, T80, T81, 142–144 (EDY), R185, Y195, and R232. Residue T80 coordinates Mg(2+). Residues 196 to 266 (TPTELARIVT…VADAALAMLD (71 aa)) form a small ATPAse domain (RuvB-S) region. Residues 269–357 (AVGFDLMDRK…PARDLWDNNA (89 aa)) are head domain (RuvB-H). Residues R305, R324, and R329 each contribute to the DNA site.

It belongs to the RuvB family. In terms of assembly, homohexamer. Forms an RuvA(8)-RuvB(12)-Holliday junction (HJ) complex. HJ DNA is sandwiched between 2 RuvA tetramers; dsDNA enters through RuvA and exits via RuvB. An RuvB hexamer assembles on each DNA strand where it exits the tetramer. Each RuvB hexamer is contacted by two RuvA subunits (via domain III) on 2 adjacent RuvB subunits; this complex drives branch migration. In the full resolvosome a probable DNA-RuvA(4)-RuvB(12)-RuvC(2) complex forms which resolves the HJ.

Its subcellular location is the cytoplasm. It catalyses the reaction ATP + H2O = ADP + phosphate + H(+). Functionally, the RuvA-RuvB-RuvC complex processes Holliday junction (HJ) DNA during genetic recombination and DNA repair, while the RuvA-RuvB complex plays an important role in the rescue of blocked DNA replication forks via replication fork reversal (RFR). RuvA specifically binds to HJ cruciform DNA, conferring on it an open structure. The RuvB hexamer acts as an ATP-dependent pump, pulling dsDNA into and through the RuvAB complex. RuvB forms 2 homohexamers on either side of HJ DNA bound by 1 or 2 RuvA tetramers; 4 subunits per hexamer contact DNA at a time. Coordinated motions by a converter formed by DNA-disengaged RuvB subunits stimulates ATP hydrolysis and nucleotide exchange. Immobilization of the converter enables RuvB to convert the ATP-contained energy into a lever motion, pulling 2 nucleotides of DNA out of the RuvA tetramer per ATP hydrolyzed, thus driving DNA branch migration. The RuvB motors rotate together with the DNA substrate, which together with the progressing nucleotide cycle form the mechanistic basis for DNA recombination by continuous HJ branch migration. Branch migration allows RuvC to scan DNA until it finds its consensus sequence, where it cleaves and resolves cruciform DNA. This chain is Holliday junction branch migration complex subunit RuvB, found in Ralstonia nicotianae (strain ATCC BAA-1114 / GMI1000) (Ralstonia solanacearum).